The following is a 439-amino-acid chain: ATP-dependent protease ATPase subunit HslU (439 aa).

Residues Ile-17, 59–64, Asp-251, Glu-317, and Arg-389 contribute to the ATP site; that span reads GVGKTE.

Belongs to the ClpX chaperone family. HslU subfamily. As to quaternary structure, a double ring-shaped homohexamer of HslV is capped on each side by a ring-shaped HslU homohexamer. The assembly of the HslU/HslV complex is dependent on binding of ATP.

It localises to the cytoplasm. In terms of biological role, ATPase subunit of a proteasome-like degradation complex; this subunit has chaperone activity. The binding of ATP and its subsequent hydrolysis by HslU are essential for unfolding of protein substrates subsequently hydrolyzed by HslV. HslU recognizes the N-terminal part of its protein substrates and unfolds these before they are guided to HslV for hydrolysis. This is ATP-dependent protease ATPase subunit HslU from Campylobacter jejuni subsp. jejuni serotype O:2 (strain ATCC 700819 / NCTC 11168).